The primary structure comprises 406 residues: Protein ALP1-like (406 aa).

The short motif at 8 to 15 is the Nuclear localization signal element; the sequence is KKKKRAEK. The DDE Tnp4 domain maps to 187–353; sequence IDITHIVMNL…IIFVCCLLHN (167 aa). Residues Asp188, Asp240, and Asp279 each coordinate a divalent metal cation.

It belongs to the HARBI1 family. A divalent metal cation is required as a cofactor.

The protein localises to the nucleus. In terms of biological role, transposase-derived protein that may have nuclease activity. The sequence is that of Protein ALP1-like from Arabidopsis thaliana (Mouse-ear cress).